Reading from the N-terminus, the 330-residue chain is Low-redox potential peroxidase (330 aa).

Positions 1–24 (MRSSTHIFVSFVVYCGVFVTSAIA) are cleaved as a signal peptide. N27 carries an N-linked (GlcNAc...) asparagine glycan. 3 disulfide bridges follow: C34-C285, C54-C123, and C251-C314. Ca(2+)-binding residues include G69, D71, and S73. Position 178 (H178) interacts with heme b. The Ca(2+) site is built by S179, D196, T198, and D203.

It belongs to the peroxidase family. Ligninase subfamily. Ca(2+) serves as cofactor. It depends on heme b as a cofactor.

It is found in the secreted. The catalysed reaction is 2 a phenolic donor + H2O2 = 2 a phenolic radical donor + 2 H2O. In terms of biological role, can oxidize the lignin redox mediator veratryl alcohol to veratryl aldehyde. May be involved in oxidation of lignocellulose substrates. This is Low-redox potential peroxidase (LnP) from Taiwanofungus camphoratus (Poroid brown-rot fungus).